A 410-amino-acid chain; its full sequence is Serine hydroxymethyltransferase (410 aa).

Residues leucine 116 and 120 to 122 (GHL) each bind (6S)-5,6,7,8-tetrahydrofolate. Residue lysine 225 is modified to N6-(pyridoxal phosphate)lysine. 349–351 (SPF) provides a ligand contact to (6S)-5,6,7,8-tetrahydrofolate.

It belongs to the SHMT family. As to quaternary structure, homodimer. The cofactor is pyridoxal 5'-phosphate.

The protein localises to the cytoplasm. It catalyses the reaction (6R)-5,10-methylene-5,6,7,8-tetrahydrofolate + glycine + H2O = (6S)-5,6,7,8-tetrahydrofolate + L-serine. It participates in one-carbon metabolism; tetrahydrofolate interconversion. It functions in the pathway amino-acid biosynthesis; glycine biosynthesis; glycine from L-serine: step 1/1. In terms of biological role, catalyzes the reversible interconversion of serine and glycine with tetrahydrofolate (THF) serving as the one-carbon carrier. This reaction serves as the major source of one-carbon groups required for the biosynthesis of purines, thymidylate, methionine, and other important biomolecules. Also exhibits THF-independent aldolase activity toward beta-hydroxyamino acids, producing glycine and aldehydes, via a retro-aldol mechanism. In Leuconostoc mesenteroides subsp. mesenteroides (strain ATCC 8293 / DSM 20343 / BCRC 11652 / CCM 1803 / JCM 6124 / NCDO 523 / NBRC 100496 / NCIMB 8023 / NCTC 12954 / NRRL B-1118 / 37Y), this protein is Serine hydroxymethyltransferase.